The chain runs to 410 residues: MAYSTSVIRRLAPSEKFFAETQTFTSITVLLDGTVDIDAMADAFDALLEAYPVYAGHLEPDSDGGFELVADDLLHPGLWVQFEGDPAPTDQLDQGVALIYLLVKPDSTPVEVTLFIHHSLADGTHMAGLLFELFARYTEVVTTGSAGPVSPNPAPEPIETVLEQRGIRKQQRSGLDRFIPAMFAYELPPKRVTTRSAAERPAAVPTTRCRLSKAETSSLVKYGRVNRLFVNNLISAAILLAEWQVRRTPHIPIPYVYNVNLRALVEPPVSATGCTLAIGVATYLAHITPQTTMVELARGIADMFQADLADGVVQQSLLHFNMQYEGAIPGLPDVVLSTNLGNAVAMSTPPGLEVVGVQSQFYRASSAVIDVYSFGVVGGELLIEHHVDAAETTIDLIRSLLRSVVSEHQH.

His118 functions as the Proton acceptor in the catalytic mechanism.

The protein belongs to the acyltransferase PapA5 family. In terms of assembly, monomer. Interacts directly with the acyl carrier protein (ACP) domain of the mycocerosic acid synthase (mas) protein.

The catalysed reaction is 2 a mycocerosyl-[mycocerosic acid synthase] + a phthiocerol = a dimycocerosyl phthiocerol + 2 holo-[mycocerosic acid synthase].. It catalyses the reaction 2 a mycocerosyl-[mycocerosic acid synthase] + a phthiodiolone = a dimycocerosyl phthiodiolone + 2 holo-[mycocerosic acid synthase].. It carries out the reaction 2 a mycocerosyl-[mycocerosic acid synthase] + a phenolphthiocerol = a dimycocerosyl phenolphthiocerol + 2 holo-[mycocerosic acid synthase].. Its function is as follows. Catalyzes diesterification of phthiocerol, phthiodiolone, and phenolphthiocerol with mycocerosic acids, the final step in the phthiocerol, phthiodiolone and phenolphthiocerol dimycocerosate esters (PDIM) synthesis. Can directly transfer the mycocerosate bound to the mycocerosic acid synthase (mas) onto the substrate alcohols. This chain is Phthiocerol/phthiodiolone dimycocerosyl transferase (papA5), found in Mycobacterium sp. (strain JLS).